We begin with the raw amino-acid sequence, 261 residues long: MSESLHLTRNGPILEITLDRPKANAIDAKTSFAMGEAFLNFRDDPELRVAIITGGGEKFFSAGWDLKAAAEGEAPDADFGPGGFAGLTEIFDLDKPVIAAVNGYAFGGGFELALAADFIVCAENASFALPEAKLGIVPDSGGVLRLPKLLPPAIVNEMVMTGRRMSAEEALRWGIVNRVVSQSELMESARELAQQLVNSAPLAIAALKEIYRATSEMPVEEGYRYIRSGVLKHYPSVLHSEDALEGPQAFAEKRAPVWKGR.

Catalysis depends on Glu111, which acts as the Nucleophile. Residue Glu131 is the Proton acceptor of the active site.

The protein belongs to the enoyl-CoA hydratase/isomerase family.

It catalyses the reaction (R)-carnitinyl-CoA = crotonobetainyl-CoA + H2O. It participates in amine and polyamine metabolism; carnitine metabolism. Catalyzes the reversible dehydration of L-carnitinyl-CoA to crotonobetainyl-CoA. This Salmonella typhi protein is Carnitinyl-CoA dehydratase.